Here is a 155-residue protein sequence, read N- to C-terminus: Large ribosomal subunit protein bL17 (155 aa).

The protein belongs to the bacterial ribosomal protein bL17 family. Part of the 50S ribosomal subunit. Contacts protein L32.

This is Large ribosomal subunit protein bL17 from Syntrophotalea carbinolica (strain DSM 2380 / NBRC 103641 / GraBd1) (Pelobacter carbinolicus).